A 264-amino-acid polypeptide reads, in one-letter code: uncharacterized protein (264 aa).

Residues 19-45 (AQEESMEQLKDINTKIDNSEKKISLEN) are a coiled coil.

This is an uncharacterized protein from Acanthamoeba polyphaga mimivirus (APMV).